We begin with the raw amino-acid sequence, 351 residues long: S-adenosylmethionine:tRNA ribosyltransferase-isomerase (351 aa).

This sequence belongs to the QueA family. In terms of assembly, monomer.

Its subcellular location is the cytoplasm. The catalysed reaction is 7-aminomethyl-7-carbaguanosine(34) in tRNA + S-adenosyl-L-methionine = epoxyqueuosine(34) in tRNA + adenine + L-methionine + 2 H(+). The protein operates within tRNA modification; tRNA-queuosine biosynthesis. Functionally, transfers and isomerizes the ribose moiety from AdoMet to the 7-aminomethyl group of 7-deazaguanine (preQ1-tRNA) to give epoxyqueuosine (oQ-tRNA). The protein is S-adenosylmethionine:tRNA ribosyltransferase-isomerase of Photobacterium profundum (strain SS9).